Reading from the N-terminus, the 474-residue chain is N-lysine methyltransferase SETD6 (474 aa).

A Phosphoserine modification is found at Ser14. The SET domain maps to 63–287; it reads PKVLVSRQGT…KGHEIFNTYG (225 aa). Position 64 is an N6-methylated lysine; by autocatalysis (Lys64). 74-76 contributes to the S-adenosyl-L-methionine binding site; the sequence is AGY. Trp123 lines the substrate pocket. Lys180 bears the N6-methylated lysine; by autocatalysis mark. Residue Tyr224 coordinates S-adenosyl-L-methionine. Residues Ser225 and Gln227 each contribute to the substrate site. S-adenosyl-L-methionine is bound by residues 252–253 and Tyr298; that span reads NH. Position 373 is an N6-methylated lysine; by autocatalysis (Lys373).

This sequence belongs to the class V-like SAM-binding methyltransferase superfamily. Histone-lysine methyltransferase family. SETD6 subfamily. Monomer, homodimer and homotrimer; these structures are stabilized in the presence of S-adenosyl-L-methionine (SAM). Post-translationally, automethylated.

The protein resides in the nucleus. It catalyses the reaction L-lysyl-[protein] + S-adenosyl-L-methionine = N(6)-methyl-L-lysyl-[protein] + S-adenosyl-L-homocysteine + H(+). The catalysed reaction is L-lysyl(8)-[histone H2AZ] + S-adenosyl-L-methionine = N(6)-methyl-L-lysyl(8)-[histone H2AZ] + S-adenosyl-L-homocysteine + H(+). Its function is as follows. Protein-lysine N-methyltransferase. Monomethylates 'Lys-310' of the RELA subunit of NF-kappa-B complex, leading to down-regulation of NF-kappa-B transcription factor activity. Monomethylates 'Lys-8' of H2AZ (H2AZK8me1). Required for the maintenance of embryonic stem cell self-renewal. Methylates PAK4. This Rattus norvegicus (Rat) protein is N-lysine methyltransferase SETD6 (Setd6).